Here is a 338-residue protein sequence, read N- to C-terminus: Hydroxyproline O-galactosyltransferase HPGT1 (338 aa).

At 1-12 the chain is on the cytoplasmic side; the sequence is MARKGSSIRLSS. Residues 13–32 traverse the membrane as a helical; Signal-anchor for type II membrane protein segment; that stretch reads SRISTLLLFMFATFASFYVA. Residues 33–338 are Lumenal-facing; sequence GRLWQESQTR…WSSEAICAGV (306 aa).

It belongs to the glycosyltransferase 31 family. Mn(2+) serves as cofactor. Expressed in roots, rosette leaves, cauline leaves, stems, flowers and siliques.

The protein localises to the golgi apparatus membrane. The protein operates within protein modification; protein glycosylation. Possesses hydroxyproline O-galactosyltransferase activity. Transfers galactose from UDP-galactose to hydroxyproline residues in the arabinogalactan proteins (AGPs). Is specific for AGPs containing non-contiguous peptidyl hydroxyproline residues. The addition of galactose onto the peptidyl hydroxyproline residues in AGP core proteins represents the first committed step in arabinogalactan polysaccharide addition. AGP glycans play essential roles in both vegetative and reproductive plant growth. This Arabidopsis thaliana (Mouse-ear cress) protein is Hydroxyproline O-galactosyltransferase HPGT1.